Consider the following 386-residue polypeptide: L-lactate dehydrogenase (386 aa).

The FMN hydroxy acid dehydrogenase domain occupies 1-380 (MIISAASDYR…SGDALSRVTR (380 aa)). A substrate-binding site is contributed by tyrosine 24. Serine 106 and glutamine 127 together coordinate FMN. Tyrosine 129 lines the substrate pocket. Residue threonine 155 coordinates FMN. Residue arginine 164 coordinates substrate. Position 251 (lysine 251) interacts with FMN. Residue histidine 275 is the Proton acceptor of the active site. Arginine 278 contacts substrate. 306–330 (DSGIRSGLDVVRMLALGADAVLLGR) contributes to the FMN binding site.

It belongs to the FMN-dependent alpha-hydroxy acid dehydrogenase family. The cofactor is FMN.

Its subcellular location is the cell inner membrane. It carries out the reaction (S)-lactate + A = pyruvate + AH2. Catalyzes the conversion of L-lactate to pyruvate. Is coupled to the respiratory chain. The polypeptide is L-lactate dehydrogenase (Xanthomonas campestris pv. campestris (strain 8004)).